The primary structure comprises 97 residues: Nucleoid-associated protein HPP12_0031 (97 aa).

The protein belongs to the YbaB/EbfC family. Homodimer.

The protein localises to the cytoplasm. The protein resides in the nucleoid. In terms of biological role, binds to DNA and alters its conformation. May be involved in regulation of gene expression, nucleoid organization and DNA protection. This is Nucleoid-associated protein HPP12_0031 from Helicobacter pylori (strain P12).